A 231-amino-acid chain; its full sequence is Ion-translocating oxidoreductase complex subunit E (231 aa).

6 helical membrane-spanning segments follow: residues 18–38, 39–59, 63–83, 86–106, 125–145, and 182–202; these read ALVQ…ATNA, LGLG…ISTL, TPAE…VSAV, LINA…PLIV, ALSA…MFVL, and PFLL…MLAG.

Belongs to the NqrDE/RnfAE family. In terms of assembly, the complex is composed of six subunits: RsxA, RsxB, RsxC, RsxD, RsxE and RsxG.

The protein resides in the cell inner membrane. Its function is as follows. Part of a membrane-bound complex that couples electron transfer with translocation of ions across the membrane. Required to maintain the reduced state of SoxR. This Escherichia coli O127:H6 (strain E2348/69 / EPEC) protein is Ion-translocating oxidoreductase complex subunit E.